A 319-amino-acid chain; its full sequence is HTH-type transcriptional regulator YidZ (319 aa).

In terms of domain architecture, HTH lysR-type spans 8–65; that stretch reads LDLNLLLCLQLLMQERSVTKAAKRMNVTPSAVSKSLAKLRAWFDDPLFVNTPLGLAPT. Positions 25-44 form a DNA-binding region, H-T-H motif; it reads VTKAAKRMNVTPSAVSKSLA.

Belongs to the LysR transcriptional regulatory family.

Functionally, involved in anaerobic NO protection. The sequence is that of HTH-type transcriptional regulator YidZ from Salmonella heidelberg (strain SL476).